We begin with the raw amino-acid sequence, 422 residues long: UPF0597 protein Kole_0595 (422 aa).

This sequence belongs to the UPF0597 family.

The chain is UPF0597 protein Kole_0595 from Kosmotoga olearia (strain ATCC BAA-1733 / DSM 21960 / TBF 19.5.1).